The following is a 292-amino-acid chain: Homoserine kinase (292 aa).

80–90 (PLARGLGSSSS) serves as a coordination point for ATP.

It belongs to the GHMP kinase family. Homoserine kinase subfamily.

The protein resides in the cytoplasm. It carries out the reaction L-homoserine + ATP = O-phospho-L-homoserine + ADP + H(+). It participates in amino-acid biosynthesis; L-threonine biosynthesis; L-threonine from L-aspartate: step 4/5. In terms of biological role, catalyzes the ATP-dependent phosphorylation of L-homoserine to L-homoserine phosphate. This Leuconostoc mesenteroides subsp. mesenteroides (strain ATCC 8293 / DSM 20343 / BCRC 11652 / CCM 1803 / JCM 6124 / NCDO 523 / NBRC 100496 / NCIMB 8023 / NCTC 12954 / NRRL B-1118 / 37Y) protein is Homoserine kinase.